A 212-amino-acid polypeptide reads, in one-letter code: MALALSLSACSPPLRRTRRAGFRTSCSIFANPAQRAKRKLLELISEEDRGLRTQKDPKKRDEIVNAIESMTVIGRSSITTDDSLSATWRLLWTTEKEQLFIIEKAGLFGTTAGDVLQVIDVNKRILNNVITFPPDGVFFVRSDIDIASPQRVNFRFNSAVLRGKNWELPLPPFGKGWFENVYMDGEIRVAKDIRGDYLIVDRAPYNWTESFV.

A chloroplast-targeting transit peptide spans 1–25; the sequence is MALALSLSACSPPLRRTRRAGFRTS.

It belongs to the PAP/fibrillin family.

It localises to the plastid. The protein resides in the chloroplast thylakoid. This chain is Probable plastid-lipid-associated protein 11, chloroplastic (PAP11), found in Arabidopsis thaliana (Mouse-ear cress).